A 414-amino-acid polypeptide reads, in one-letter code: Esterase FrsA (414 aa).

Belongs to the FrsA family.

The enzyme catalyses a carboxylic ester + H2O = an alcohol + a carboxylate + H(+). Its function is as follows. Catalyzes the hydrolysis of esters. This Escherichia coli O8 (strain IAI1) protein is Esterase FrsA.